The sequence spans 277 residues: Undecaprenyl-diphosphatase (277 aa).

A run of 7 helical transmembrane segments spans residues 1–21, 41–61, 90–110, 114–134, 191–211, 224–244, and 255–275; these read MTWI…FLPI, GAAF…IYFW, WLII…EDWI, FRSL…LALA, AFLL…YTSL, ETLV…AWLM, and FVWY…AGVI.

This sequence belongs to the UppP family.

The protein localises to the cell membrane. The enzyme catalyses di-trans,octa-cis-undecaprenyl diphosphate + H2O = di-trans,octa-cis-undecaprenyl phosphate + phosphate + H(+). Its function is as follows. Catalyzes the dephosphorylation of undecaprenyl diphosphate (UPP). Confers resistance to bacitracin. This Micrococcus luteus (strain ATCC 4698 / DSM 20030 / JCM 1464 / CCM 169 / CCUG 5858 / IAM 1056 / NBRC 3333 / NCIMB 9278 / NCTC 2665 / VKM Ac-2230) (Micrococcus lysodeikticus) protein is Undecaprenyl-diphosphatase.